The chain runs to 956 residues: Zinc finger CCHC domain-containing protein 14 (956 aa).

8 disordered regions span residues 25-50, 78-99, 206-229, 243-276, 361-464, 485-505, 543-583, and 750-786; these read SSLNSGGGGGGGGGGGGKSAPGPSGA, ALHTSAHSTEESLPKRPLGKHG, SSSSPSQQLQSPSPGNPSLPKVGA, GIPSSQSSAQHHLQHSASTSASLPHCSHTGGTGS, KEKS…EKEK, PVQNETGSSPAAHHPLPPQLM, LEER…QGLS, and FYSGGAGSSSPGNIPASSQSHHHHHHHQQPPAPPQPA. Positions 29–43 are enriched in gly residues; sequence SGGGGGGGGGGGGKS. 2 stretches are compositionally biased toward low complexity: residues 206–225 and 246–265; these read SSSSPSQQLQSPSPGNPSLP and SSQSSAQHHLQHSASTSASL. Polar residues predominate over residues 369 to 389; it reads LNSSAPSLVTSSGVARVTPTS. Residues 423–432 show a composition bias toward low complexity; it reads SSEYSSSSSS. Over residues 438–464 the composition is skewed to basic and acidic residues; that stretch reads VREESSDSAEESDRRVDIHVEGTEKEK. The segment covering 750 to 768 has biased composition (low complexity); sequence FYSGGAGSSSPGNIPASSQ. Residues 913-930 form a CCHC-type zinc finger; sequence LSCYNCGATGHRAQDCKQ.

The chain is Zinc finger CCHC domain-containing protein 14 (Zcchc14) from Mus musculus (Mouse).